A 1388-amino-acid polypeptide reads, in one-letter code: ABC transporter G family member 52 (1388 aa).

The tract at residues 1-24 is disordered; it reads MDDAGEICSFSRSSSSAREDDEED. In terms of domain architecture, ABC transporter 1 spans 135–406; that stretch reads TNALCITKKI…FKSVGFKCPE (272 aa). 168–175 is a binding site for ATP; sequence GPPGSGKT. Residues 484 to 697 form the ABC transmembrane type-2 1 domain; the sequence is ELLKANIYRE…ALNALAVNEF (214 aa). 7 consecutive transmembrane segments (helical) span residues 503 to 523, 541 to 561, 590 to 610, 621 to 641, 646 to 666, 675 to 695, and 732 to 752; these read LYIFKAIQLKLVAINAMTVFI, ALFYGMMMIVYSALAEMGPAI, IPISFLNTTVWVFLTYYVIGF, FLVLFVLCEVIYALFRFIVAL, VIASNMGPFCILIFMLSCGFI, WWIWLYWISPLMYALNALAVN, and ISIGALLGYVLLFNVLYTICL. Positions 791–1043 constitute an ABC transporter 2 domain; that stretch reads ITFEDIRYSV…ELIKYFEAIQ (253 aa). 836-843 serves as a coordination point for ATP; that stretch reads GVSGAGKT. One can recognise an ABC transmembrane type-2 2 domain in the interval 1116-1330; it reads TQWLACLWKQ…TLNGLLTSQF (215 aa). 7 helical membrane passes run 1136–1156, 1167–1183, 1223–1243, 1250–1270, 1280–1300, 1305–1325, and 1357–1377; these read IVVRYLFTIVVALLFGTMFWG, LFSIMGAMYSACMAMGV, FPYIFLQTIIYCVLVYAMVGY, FLWYLFFMFFTLSYFTFYGMM, MSAVVSTAFYNIWNLFSGFLI, IPVWWRWYYWMCPVAWTLNGL, and LLWVAAVAVVSFAILFAFLFG.

The protein belongs to the ABC transporter superfamily. ABCG family. PDR (TC 3.A.1.205) subfamily.

The protein resides in the membrane. Functionally, may be a general defense protein. This is ABC transporter G family member 52 from Oryza sativa subsp. japonica (Rice).